The sequence spans 368 residues: Trans-enoyl reductase TwmE (368 aa).

49 to 52 (SDYK) provides a ligand contact to NADP(+). 135-142 (FKAATLGT) is a substrate binding site. NADP(+) contacts are provided by residues 204–207 (SPRS), tyrosine 222, and 269–270 (LE). Residue 290 to 294 (SAELY) participates in substrate binding. An NADP(+)-binding site is contributed by 360-361 (HP).

This sequence belongs to the zinc-containing alcohol dehydrogenase family. In terms of assembly, monomer.

Its pathway is secondary metabolite biosynthesis. Its function is as follows. Trans-enoyl reductase; part of the gene cluster that mediates the biosynthesis of wortmanamides A and B, reduced long-chain polyketides amidated with a specific omega-amino acid, 5-aminopentanoic acid (5PA). The PKS modules of TwmB are involved in the synthesis of the polyketide backbone, whereas the non-canonical C domain of TwmB is a bonafide condensation domain that specifically selects 5PA and catalyzes amidation to release polyketide chain. The C domain clearly prefers C16 and C18 fatty acyl substrates, which is consistent with simultaneous formation of both octaketide and nonaketide acyl amides wortmanamides A and B. Because TwmB lacks a designated enoylreductase (ER) domain, the required activity is provided the enoyl reductase TwmE. The roles of the remaining enzymes have still to be clarified. This Talaromyces wortmannii (Penicillium wortmannii) protein is Trans-enoyl reductase TwmE.